The sequence spans 347 residues: Protein RecA (347 aa).

ATP is bound at residue 66-73 (GPESSGKT).

The protein belongs to the RecA family.

The protein resides in the cytoplasm. Can catalyze the hydrolysis of ATP in the presence of single-stranded DNA, the ATP-dependent uptake of single-stranded DNA by duplex DNA, and the ATP-dependent hybridization of homologous single-stranded DNAs. It interacts with LexA causing its activation and leading to its autocatalytic cleavage. This Burkholderia cepacia (Pseudomonas cepacia) protein is Protein RecA.